The primary structure comprises 126 residues: Protein ApaG (126 aa).

An ApaG domain is found at Thr2 to His126.

The polypeptide is Protein ApaG (Shewanella sediminis (strain HAW-EB3)).